The primary structure comprises 1602 residues: MAP kinase-activating death domain protein (1602 aa).

The 255-residue stretch at Tyr13–Asp267 folds into the uDENN domain. Over residues Pro105–Ala121 the composition is skewed to basic and acidic residues. The segment at Pro105–Arg167 is disordered. A compositionally biased stretch (low complexity) spans Ala126–Ser137. The span at Gly138–Pro156 shows a compositional bias: polar residues. Position 155 is a phosphoserine (Ser155). A compositionally biased stretch (basic residues) spans Arg157 to Asn166. The cDENN domain maps to Arg288–Lys428. The region spanning Ala430–Arg564 is the dDENN domain. Disordered stretches follow at residues Ala603 to Ser635 and Gln676 to Glu840. The segment covering Ser614–Asp629 has biased composition (acidic residues). Phosphoserine is present on residues Ser688 and Ser691. Residues Ser688–Arg698 show a composition bias toward polar residues. A compositionally biased stretch (low complexity) spans Ser699–Thr711. Position 778 is a phosphoserine (Ser778). The span at Glu789–Arg803 shows a compositional bias: polar residues. Phosphoserine is present on residues Ser812, Ser817, and Ser819. Over residues Arg826–Thr839 the composition is skewed to low complexity. Phosphoserine is present on residues Ser857, Ser861, Ser895, Ser900, and Ser909. Disordered stretches follow at residues Lys870 to Asn920, Lys1030 to Ser1089, and Thr1113 to Glu1231. Polar residues predominate over residues Gln911–Asn920. Phosphoserine is present on Ser1038. 2 positions are modified to phosphothreonine: Thr1040 and Thr1045. Position 1089 is a phosphoserine (Ser1089). Positions Gln1119 to Arg1134 are enriched in polar residues. Residues Ser1151–Ser1162 show a composition bias toward low complexity. Over residues Ser1191–Ile1209 the composition is skewed to polar residues. Residue Thr1194 is modified to Phosphothreonine. A phosphoserine mark is found at Ser1196 and Ser1225. The Death domain maps to Gly1295 to Glu1370.

The protein belongs to the MADD family. Interacts (via death domain) with TNFRSF1A (via death domain). Interacts with PIDD1. Interacts with YWHAZ. Interacts (via death domain) with KIF1B; links the motor KIF1B to Rab3-carrying vesicles in anterograde synaptic vesicle transport. Interacts with KIF1A. Interacts (via uDENN domain) with RAB3A, RAB3B, RAB3C and RAB3D; the GTP-bound form of the Rab proteins is preferred for interaction. In terms of tissue distribution, expressed in all tissues examined with the highest expression in brain.

It is found in the cell membrane. It localises to the cytoplasm. The protein resides in the cell projection. Its subcellular location is the axon. Guanyl-nucleotide exchange factor that regulates small GTPases of the Rab family. Converts GDP-bound inactive form of RAB27A and RAB27B to the GTP-bound active forms. Converts GDP-bound inactive form of RAB3A, RAB3C and RAB3D to the GTP-bound active forms, GTPases involved in synaptic vesicle exocytosis and vesicle secretion. Plays a role in synaptic vesicle formation and in vesicle trafficking at the neuromuscular junction. Involved in up-regulating a post-docking step of synaptic exocytosis in central synapses. Probably by binding to the motor proteins KIF1B and KIF1A, mediates motor-dependent transport of GTP-RAB3A-positive vesicles to the presynaptic nerve terminals. Plays a role in TNFA-mediated activation of the MAPK pathway, including ERK1/2. May link TNFRSF1A with MAP kinase activation. May be involved in the regulation of TNFA-induced apoptosis. This is MAP kinase-activating death domain protein from Rattus norvegicus (Rat).